Consider the following 150-residue polypeptide: Endoribonuclease YbeY (150 aa).

Residues H112, H116, and D122 each coordinate Zn(2+).

This sequence belongs to the endoribonuclease YbeY family. The cofactor is Zn(2+).

Its subcellular location is the cytoplasm. Its function is as follows. Single strand-specific metallo-endoribonuclease involved in late-stage 70S ribosome quality control and in maturation of the 3' terminus of the 16S rRNA. The chain is Endoribonuclease YbeY from Protochlamydia amoebophila (strain UWE25).